The chain runs to 212 residues: Tetraspanin-31-A (212 aa).

At 1-12 (MVCGGFTCSKNA) the chain is on the cytoplasmic side. A helical transmembrane segment spans residues 13–33 (LCALNVVYMLVGLLLIGVAAW). The Extracellular portion of the chain corresponds to 34 to 44 (GKGFGIVSSIH). The helical transmembrane segment at 45 to 65 (IIGGVIAIGVFLLLIAIIGLI) threads the bilayer. Topologically, residues 66–72 (GAVSHHQ) are cytoplasmic. Residues 73–93 (VMLFIYMVVLILVFIFQFIVS) traverse the membrane as a helical segment. Over 94–175 (CSCLAMNRSQ…MLNHADEALK (82 aa)) the chain is Extracellular. Asn100, Asn109, Asn117, and Asn134 each carry an N-linked (GlcNAc...) asparagine glycan. Residues 176-196 (ILGGVGLFFSFTEILGVWLAF) form a helical membrane-spanning segment. Topologically, residues 197–212 (RFRNQKDPRANPSAFL) are cytoplasmic.

Belongs to the tetraspanin (TM4SF) family.

The protein resides in the membrane. This Xenopus laevis (African clawed frog) protein is Tetraspanin-31-A (tspan31-a).